Reading from the N-terminus, the 311-residue chain is Putative dihydroorotate dehydrogenase A (fumarate) (311 aa).

Substrate is bound by residues lysine 45, asparagine 69–leucine 73, and asparagine 128. Lysine 45–threonine 46 provides a ligand contact to FMN. Residue asparagine 128 coordinates FMN. Cysteine 131 acts as the Nucleophile in catalysis. 2 residues coordinate FMN: lysine 165 and valine 193. A substrate-binding site is contributed by asparagine 194 to serine 195. Residues glycine 220, glycine 248–glycine 249, and glycine 270–threonine 271 contribute to the FMN site.

The protein belongs to the dihydroorotate dehydrogenase family. Type 1 subfamily. As to quaternary structure, homodimer. The cofactor is FMN.

The protein localises to the cytoplasm. The enzyme catalyses (S)-dihydroorotate + fumarate = orotate + succinate. It functions in the pathway pyrimidine metabolism; UMP biosynthesis via de novo pathway. Functionally, catalyzes the conversion of dihydroorotate to orotate with fumarate as the electron acceptor. The sequence is that of Putative dihydroorotate dehydrogenase A (fumarate) (pyrD) from Streptococcus uberis (strain ATCC BAA-854 / 0140J).